The sequence spans 159 residues: 2-C-methyl-D-erythritol 2,4-cyclodiphosphate synthase (159 aa).

Positions 8 and 10 each coordinate a divalent metal cation. 4-CDP-2-C-methyl-D-erythritol 2-phosphate-binding positions include 8–10 and 34–35; these read DVH and HS. Residue H42 coordinates a divalent metal cation. Residues 56–58, 61–65, 100–106, 132–135, F139, and R142 each bind 4-CDP-2-C-methyl-D-erythritol 2-phosphate; these read DIG, FPDTD, AQAPKML, and TTTE.

The protein belongs to the IspF family. In terms of assembly, homotrimer. It depends on a divalent metal cation as a cofactor.

It carries out the reaction 4-CDP-2-C-methyl-D-erythritol 2-phosphate = 2-C-methyl-D-erythritol 2,4-cyclic diphosphate + CMP. Its pathway is isoprenoid biosynthesis; isopentenyl diphosphate biosynthesis via DXP pathway; isopentenyl diphosphate from 1-deoxy-D-xylulose 5-phosphate: step 4/6. In terms of biological role, involved in the biosynthesis of isopentenyl diphosphate (IPP) and dimethylallyl diphosphate (DMAPP), two major building blocks of isoprenoid compounds. Catalyzes the conversion of 4-diphosphocytidyl-2-C-methyl-D-erythritol 2-phosphate (CDP-ME2P) to 2-C-methyl-D-erythritol 2,4-cyclodiphosphate (ME-CPP) with a corresponding release of cytidine 5-monophosphate (CMP). The chain is 2-C-methyl-D-erythritol 2,4-cyclodiphosphate synthase from Escherichia coli O127:H6 (strain E2348/69 / EPEC).